The following is a 323-amino-acid chain: Thymidylate synthase (323 aa).

Residues R21 and 172–173 (RR) each bind dUMP. Catalysis depends on C192, which acts as the Nucleophile. Residues 214–217 (RSND), N225, and 255–257 (HVY) contribute to the dUMP site. Residue D217 participates in (6R)-5,10-methylene-5,6,7,8-tetrahydrofolate binding. Residue A322 coordinates (6R)-5,10-methylene-5,6,7,8-tetrahydrofolate.

Belongs to the thymidylate synthase family. Bacterial-type ThyA subfamily. In terms of assembly, homodimer.

Its subcellular location is the cytoplasm. It carries out the reaction dUMP + (6R)-5,10-methylene-5,6,7,8-tetrahydrofolate = 7,8-dihydrofolate + dTMP. Its pathway is pyrimidine metabolism; dTTP biosynthesis. In terms of biological role, catalyzes the reductive methylation of 2'-deoxyuridine-5'-monophosphate (dUMP) to 2'-deoxythymidine-5'-monophosphate (dTMP) while utilizing 5,10-methylenetetrahydrofolate (mTHF) as the methyl donor and reductant in the reaction, yielding dihydrofolate (DHF) as a by-product. This enzymatic reaction provides an intracellular de novo source of dTMP, an essential precursor for DNA biosynthesis. This is Thymidylate synthase from Pseudomonas syringae pv. tomato (strain ATCC BAA-871 / DC3000).